A 477-amino-acid chain; its full sequence is Inositol phosphosphingolipids phospholipase C (477 aa).

Residues 1-398 (MYNRKDRDVH…QRQKFFRGLH (398 aa)) are Cytoplasmic-facing. E100 lines the Mg(2+) pocket. Residue H334 is the Proton acceptor of the active site. The helical transmembrane segment at 399 to 417 (FWASILLLIASLVVTTFTA) threads the bilayer. Residues 418-424 (NKAGWSS) are Mitochondrial intermembrane-facing. Residues 425 to 449 (IFWVLFAIAVSISGTIDGAISFLFG) form a helical membrane-spanning segment. Residues 450–477 (RSEIRALIEVEQEVLDAEHHLQTFLSEK) lie on the Cytoplasmic side of the membrane.

It belongs to the neutral sphingomyelinase family. Mg(2+) is required as a cofactor.

Its subcellular location is the endoplasmic reticulum membrane. The protein localises to the mitochondrion outer membrane. It catalyses the reaction an N-acyl-(4R)-4-hydroxysphinganine-1-phosphoinositol + H2O = 1D-myo-inositol 1-phosphate + an N-acyl-(4R)-4-hydroxysphinganine + H(+). It carries out the reaction a mannosylinositol-1-phospho-N-acyl-sphingoid base + H2O = mannosylinositol-1-phosphate + an N-acyl-sphingoid base + H(+). The catalysed reaction is an inositol phosphomannosylinositol-1-phospho-N-acyl-(4R)-4-hydroxysphinganine + H2O = mannosyldiinositol-1-phosphate + an N-acyl-(4R)-4-hydroxysphinganine + H(+). Its pathway is lipid metabolism; sphingolipid metabolism. With respect to regulation, activated through localization to mitochondria in specific growth phases. In terms of biological role, responsible for the hydrolysis of the phosphosphingolipids (IPS), inositol phosphorylceramide (IPC), mannosylinositol phosphorylceramide (MIPC), and mannosyldiinositol phosphorylceramide (M(IP)2C). Regulates sphingolipid metabolism in mitochondria, especially the formation of alpha-hydroxylated very long chain phytoceramides. The generated ceramides contribute to the normal function of mitochondria. Also active on sphingomyelin (SM), but this activity is probably not physiologically relevant. The protein is Inositol phosphosphingolipids phospholipase C of Saccharomyces cerevisiae (strain ATCC 204508 / S288c) (Baker's yeast).